Reading from the N-terminus, the 310-residue chain is Probable GTP 3',8-cyclase (310 aa).

In terms of domain architecture, Radical SAM core spans 5–232 (RFGRPVTNLR…RRRKYFIPID (228 aa)). Arginine 14 serves as a coordination point for GTP. The [4Fe-4S] cluster site is built by cysteine 21 and cysteine 25. Tyrosine 27 is an S-adenosyl-L-methionine binding site. Cysteine 28 provides a ligand contact to [4Fe-4S] cluster. Lysine 61 contributes to the GTP binding site. Glycine 65 contributes to the S-adenosyl-L-methionine binding site. Threonine 90 provides a ligand contact to GTP. Residue serine 114 participates in S-adenosyl-L-methionine binding. Lysine 150 serves as a coordination point for GTP. Methionine 189 provides a ligand contact to S-adenosyl-L-methionine. Residues cysteine 250 and cysteine 253 each coordinate [4Fe-4S] cluster. 255-257 (RLR) lines the GTP pocket. A [4Fe-4S] cluster-binding site is contributed by cysteine 267.

It belongs to the radical SAM superfamily. MoaA family. Requires [4Fe-4S] cluster as cofactor.

It carries out the reaction GTP + AH2 + S-adenosyl-L-methionine = (8S)-3',8-cyclo-7,8-dihydroguanosine 5'-triphosphate + 5'-deoxyadenosine + L-methionine + A + H(+). It functions in the pathway cofactor biosynthesis; molybdopterin biosynthesis. Catalyzes the cyclization of GTP to (8S)-3',8-cyclo-7,8-dihydroguanosine 5'-triphosphate. The polypeptide is Probable GTP 3',8-cyclase (Pyrococcus horikoshii (strain ATCC 700860 / DSM 12428 / JCM 9974 / NBRC 100139 / OT-3)).